Consider the following 305-residue polypeptide: NAD kinase (305 aa).

D76 serves as the catalytic Proton acceptor. NAD(+)-binding positions include 76 to 77 (DG), 150 to 151 (ND), R161, and D180.

It belongs to the NAD kinase family. A divalent metal cation is required as a cofactor.

The protein localises to the cytoplasm. It catalyses the reaction NAD(+) + ATP = ADP + NADP(+) + H(+). Its function is as follows. Involved in the regulation of the intracellular balance of NAD and NADP, and is a key enzyme in the biosynthesis of NADP. Catalyzes specifically the phosphorylation on 2'-hydroxyl of the adenosine moiety of NAD to yield NADP. This is NAD kinase from Treponema pallidum (strain Nichols).